Here is a 262-residue protein sequence, read N- to C-terminus: PsbP domain-containing protein 6, chloroplastic (262 aa).

Cysteine 128 and cysteine 132 form a disulfide bridge.

Belongs to the PsbP family.

Its subcellular location is the plastid. The protein localises to the chloroplast thylakoid lumen. In terms of biological role, may be involved in the redox regulation of photosystem II. The polypeptide is PsbP domain-containing protein 6, chloroplastic (PPD6) (Arabidopsis thaliana (Mouse-ear cress)).